Here is a 292-residue protein sequence, read N- to C-terminus: MLKDLVREKLLTIMNTKAYTQFNPEQLLQLENEMKIYMKSGDSALTEGNYFFLMEMLFYVLVYRNQDVDAQVVYNTLRDRLGENSYKMVIMKATLLQINGNDKGAIEYLENLLNDDLEYETDFVTYVSIAKKLIAIKTTSKNLSQESVLKEVVALTDKFPLDAELWWYASEIYFEMGQFEKACYCLEQVLCITPFNYACFGRLSETLYYEALRSKKQTKTELLEKALKNALRSVELSELYLKGWALVNIISRELGRNKQNDLIKLSASKLKEISAKSNNKDKITAELILNKI.

A TPR repeat occupies 163–196 (AELWWYASEIYFEMGQFEKACYCLEQVLCITPFN).

This sequence belongs to the EMC2 family. As to quaternary structure, component of the ER membrane protein complex (EMC), which is composed of EMC1, EMC2, EMC3, EMC4, EMC5 and EMC6.

Its subcellular location is the endoplasmic reticulum membrane. Its function is as follows. Part of the endoplasmic reticulum membrane protein complex (EMC) that enables the energy-independent insertion into endoplasmic reticulum membranes of newly synthesized membrane proteins. Preferentially accommodates proteins with transmembrane domains that are weakly hydrophobic or contain destabilizing features such as charged and aromatic residues. Involved in the cotranslational insertion of multi-pass membrane proteins in which stop-transfer membrane-anchor sequences become ER membrane spanning helices. It is also required for the post-translational insertion of tail-anchored/TA proteins in endoplasmic reticulum membranes. By mediating the proper cotranslational insertion of N-terminal transmembrane domains in an N-exo topology, with translocated N-terminus in the lumen of the ER, controls the topology of multi-pass membrane proteins. The sequence is that of ER membrane protein complex subunit 2 (EMC2) from Saccharomyces cerevisiae (strain ATCC 204508 / S288c) (Baker's yeast).